A 384-amino-acid polypeptide reads, in one-letter code: Small ribosomal subunit protein mS31 (384 aa).

Residues 1 to 54 (MLHRIPAFLRPRPFSGLPLSCGNRDVSVAVLPAAQSGAVRTENNIQRHFCTSRS) constitute a mitochondrion transit peptide. Residues 101–136 (TANVKTPKPRGRKPSASLEATVDRLQKAPEDPPKKR) are disordered. The segment covering 121-136 (TVDRLQKAPEDPPKKR) has biased composition (basic and acidic residues).

The protein belongs to the mitochondrion-specific ribosomal protein mS31 family. Component of the mitochondrial ribosome small subunit (28S) which comprises a 12S rRNA and about 30 distinct proteins.

It is found in the mitochondrion. This Mus musculus (Mouse) protein is Small ribosomal subunit protein mS31 (Mrps31).